A 614-amino-acid chain; its full sequence is Probable glutamate--tRNA ligase, cytoplasmic (614 aa).

130–132 (RFA) is an L-glutamate binding site. A 'HIGH' region motif is present at residues 135–144 (PSGCLHIGHL). H140 is a binding site for ATP. L-glutamate-binding positions include D166, 303-307 (YDFVC), and R321. Residues E324 and 359–363 (VLSKR) contribute to the ATP site. The 'KMSKS' region motif lies at 359-363 (VLSKR).

This sequence belongs to the class-I aminoacyl-tRNA synthetase family. Glutamate--tRNA ligase type 2 subfamily.

The protein resides in the cytoplasm. It catalyses the reaction tRNA(Glu) + L-glutamate + ATP = L-glutamyl-tRNA(Glu) + AMP + diphosphate. The chain is Probable glutamate--tRNA ligase, cytoplasmic from Vairimorpha ceranae (strain BRL01) (Microsporidian parasite).